The chain runs to 1357 residues: Ubiquitin carboxyl-terminal hydrolase 19 (1357 aa).

Disordered stretches follow at residues methionine 1–aspartate 52, leucine 162–alanine 239, and valine 275–aspartate 296. Residues methionine 1–tyrosine 1330 are Cytoplasmic-facing. Composition is skewed to basic and acidic residues over residues aspartate 28–aspartate 52 and serine 171–asparagine 182. In terms of domain architecture, CS 1 spans lysine 51–leucine 140. Low complexity predominate over residues serine 194–alanine 206. Phosphoserine is present on residues serine 221 and serine 283. Positions leucine 321–glutamate 423 constitute a CS 2 domain. Positions alanine 432–aspartate 479 are disordered. The segment covering proline 437–glycine 457 has biased composition (low complexity). Residues glutamate 459–aspartate 475 are compositionally biased toward basic and acidic residues. A USP domain is found at threonine 536–arginine 1253. The active-site Nucleophile is cysteine 545. Cysteine 830, cysteine 833, cysteine 847, cysteine 850, cysteine 856, cysteine 860, histidine 868, and cysteine 872 together coordinate Zn(2+). The MYND-type zinc-finger motif lies at cysteine 830–cysteine 872. The interval aspartate 962–serine 981 is disordered. Histidine 1204 serves as the catalytic Proton acceptor. Positions arginine 1259–aspartate 1271 are enriched in basic and acidic residues. 2 disordered regions span residues arginine 1259 to alanine 1278 and alanine 1292 to proline 1320. A helical transmembrane segment spans residues phenylalanine 1331–valine 1351. Over serine 1352 to arginine 1357 the chain is Lumenal.

In terms of assembly, interacts with RNF123. Interacts with BIRC2/c-IAP1, BIRC3/c-IAP2 and XIAP/BIRC4. Interacts with HIF1A (via N-terminus). As to expression, expressed in testis, heart, kidney and skeletal muscle. Low levels of expression are detectable in all other tissues screened.

It localises to the endoplasmic reticulum membrane. The catalysed reaction is Thiol-dependent hydrolysis of ester, thioester, amide, peptide and isopeptide bonds formed by the C-terminal Gly of ubiquitin (a 76-residue protein attached to proteins as an intracellular targeting signal).. Functionally, deubiquitinating enzyme that regulates the degradation of various proteins by removing ubiquitin moieties, thereby preventing their proteasomal degradation. Stabilizes RNF123, which promotes CDKN1B degradation and contributes to cell proliferation. Decreases the levels of ubiquitinated proteins during skeletal muscle formation and acts to repress myogenesis. Modulates transcription of major myofibrillar proteins. Also involved in turnover of endoplasmic-reticulum-associated degradation (ERAD) substrates. Mechanistically, deubiquitinates and thereby stabilizes several E3 ligases involved in the ERAD pathway including SYVN1 or MARCHF6. Regulates the stability of other E3 ligases including BIRC2/c-IAP1 and BIRC3/c-IAP2 by preventing their ubiquitination. Required for cells to mount an appropriate response to hypoxia by rescuing HIF1A from degradation in a non-catalytic manner and by mediating the deubiquitination of FUNDC1. Attenuates mitochondrial damage and ferroptosis by targeting and stabilizing NADPH oxidase 4/NOX4. Negatively regulates TNF-alpha- and IL-1beta-triggered NF-kappa-B activation by hydrolyzing 'Lys-27'- and 'Lys-63'-linked polyubiquitin chains from MAP3K7. Modulates also the protein level and aggregation of polyQ-expanded huntingtin/HTT through HSP90AA1. This chain is Ubiquitin carboxyl-terminal hydrolase 19 (Usp19), found in Rattus norvegicus (Rat).